We begin with the raw amino-acid sequence, 38 residues long: Phospholipase A2 2 (38 aa).

Ca(2+) contacts are provided by Tyr-28, Gly-30, and Gly-32.

It belongs to the phospholipase A2 family. Group I subfamily. It depends on Ca(2+) as a cofactor. As to expression, expressed by the venom gland.

The protein resides in the secreted. The enzyme catalyses a 1,2-diacyl-sn-glycero-3-phosphocholine + H2O = a 1-acyl-sn-glycero-3-phosphocholine + a fatty acid + H(+). Its function is as follows. Snake venom phospholipase A2 (PLA2) that inhibits neuromuscular transmission by blocking acetylcholine release from the nerve termini. PLA2 catalyzes the calcium-dependent hydrolysis of the 2-acyl groups in 3-sn-phosphoglycerides. This Calliophis bivirgatus (Blue Malaysian coral snake) protein is Phospholipase A2 2.